Here is a 98-residue protein sequence, read N- to C-terminus: NADH-ubiquinone oxidoreductase chain 4L (98 aa).

3 helical membrane-spanning segments follow: residues 1-21, 29-49, and 58-78; these read MPIIYMNIMLSFIISLLGMLI, SLLCLEGMMLSLFIMSTLMAL, and IVPVALLVFAACEAAVGLALL.

This sequence belongs to the complex I subunit 4L family. In terms of assembly, core subunit of respiratory chain NADH dehydrogenase (Complex I) which is composed of 45 different subunits.

The protein localises to the mitochondrion inner membrane. It catalyses the reaction a ubiquinone + NADH + 5 H(+)(in) = a ubiquinol + NAD(+) + 4 H(+)(out). In terms of biological role, core subunit of the mitochondrial membrane respiratory chain NADH dehydrogenase (Complex I) which catalyzes electron transfer from NADH through the respiratory chain, using ubiquinone as an electron acceptor. Part of the enzyme membrane arm which is embedded in the lipid bilayer and involved in proton translocation. The sequence is that of NADH-ubiquinone oxidoreductase chain 4L (MT-ND4L) from Semnopithecus entellus (Northern plains gray langur).